Reading from the N-terminus, the 394-residue chain is uncharacterized protein (394 aa).

Transmembrane regions (helical) follow at residues 13-35, 50-72, 79-97, 107-129, 136-158, 168-190, 218-240, 250-272, 277-299, 309-331, 344-366, and 371-393; these read AIIG…VPVL, VGVA…GWLS, LIIN…IAWS, GRGL…ELVL, IMGL…SPII, FLIN…PASL, INLS…PVEL, VPEI…CICF, VLYS…GIFL, ILGL…ALVN, AIYS…ILFS, and FEVL…LYLI.

Belongs to the major facilitator superfamily.

It localises to the cell membrane. This is an uncharacterized protein from Buchnera aphidicola subsp. Baizongia pistaciae (strain Bp).